A 315-amino-acid polypeptide reads, in one-letter code: uncharacterized protein (315 aa).

This is an uncharacterized protein from Homo sapiens (Human).